The primary structure comprises 267 residues: Sepiapterin reductase (267 aa).

Residue Met-1 is modified to N-acetylmethionine. Position 20-26 (20-26 (GASRGFG)) interacts with NADP(+). Position 38 is a phosphoserine (Ser-38). NADP(+) contacts are provided by residues 48 to 49 (RN) and 75 to 76 (DL). Substrate-binding positions include 163-164 (SI) and Tyr-176. Lys-180 provides a ligand contact to NADP(+). At Ser-201 the chain carries Phosphoserine. Residue Gly-205 participates in substrate binding. Position 207–212 (207–212 (LDTDMQ)) interacts with NADP(+). Ser-219 carries the post-translational modification Phosphoserine. Asp-263 is a substrate binding site.

The protein belongs to the sepiapterin reductase family. As to quaternary structure, homodimer.

It is found in the cytoplasm. The catalysed reaction is L-erythro-7,8-dihydrobiopterin + NADP(+) = L-sepiapterin + NADPH + H(+). It carries out the reaction (6R)-L-erythro-5,6,7,8-tetrahydrobiopterin + 2 NADP(+) = 6-pyruvoyl-5,6,7,8-tetrahydropterin + 2 NADPH + 2 H(+). Its function is as follows. Catalyzes the final one or two reductions in tetra-hydrobiopterin biosynthesis to form 5,6,7,8-tetrahydrobiopterin. The sequence is that of Sepiapterin reductase (SPR) from Bos taurus (Bovine).